Consider the following 549-residue polypeptide: Chaperonin GroEL (549 aa).

ATP-binding positions include 30–33 (TLGP), Lys51, 87–91 (DGTTT), Gly415, and Asp496.

Belongs to the chaperonin (HSP60) family. As to quaternary structure, forms a cylinder of 14 subunits composed of two heptameric rings stacked back-to-back. Interacts with the co-chaperonin GroES.

It localises to the cytoplasm. The enzyme catalyses ATP + H2O + a folded polypeptide = ADP + phosphate + an unfolded polypeptide.. Functionally, together with its co-chaperonin GroES, plays an essential role in assisting protein folding. The GroEL-GroES system forms a nano-cage that allows encapsulation of the non-native substrate proteins and provides a physical environment optimized to promote and accelerate protein folding. This Acidiphilium cryptum (strain JF-5) protein is Chaperonin GroEL.